A 1093-amino-acid polypeptide reads, in one-letter code: Protein translocase subunit SecA (1093 aa).

ATP contacts are provided by residues Gln-84, 102-106 (GEGKT), and Asp-491. Disordered regions lie at residues 837-869 (QNLQ…SEHE) and 904-1062 (SELE…TSEA). Basic and acidic residues-rich tracts occupy residues 904–937 (SELE…DATK), 944–971 (EELK…EKLK), and 978–1062 (PKDL…TSEA).

Belongs to the SecA family. As to quaternary structure, monomer and homodimer. Part of the essential Sec protein translocation apparatus which comprises SecA, SecYEG and auxiliary proteins SecDF. Other proteins may also be involved.

Its subcellular location is the cell membrane. The protein localises to the cytoplasm. The catalysed reaction is ATP + H2O + cellular proteinSide 1 = ADP + phosphate + cellular proteinSide 2.. In terms of biological role, part of the Sec protein translocase complex. Interacts with the SecYEG preprotein conducting channel. Has a central role in coupling the hydrolysis of ATP to the transfer of proteins into and across the cell membrane, serving as an ATP-driven molecular motor driving the stepwise translocation of polypeptide chains across the membrane. In Mycoplasmopsis synoviae (strain 53) (Mycoplasma synoviae), this protein is Protein translocase subunit SecA.